We begin with the raw amino-acid sequence, 362 residues long: Very-long-chain (3R)-3-hydroxyacyl-CoA dehydratase 3 (362 aa).

Position 1 is an N-acetylmethionine (Met1). Over 1 to 149 (MENQVLTPHV…ETLTSLKKGY (149 aa)) the chain is Cytoplasmic. A CS domain is found at 5–94 (VLTPHVYWAQ…KESQWWERLT (90 aa)). Residue Thr7 is modified to Phosphothreonine. Residues 111–136 (LDESDAEMELRAKEEEQLNKLRLESQ) adopt a coiled-coil conformation. Phosphoserine is present on residues Ser114 and Ser135. Residues 150–170 (LFMYNLVQFLGFSWIFVNMTV) form a helical membrane-spanning segment. The Lumenal portion of the chain corresponds to 171–189 (RFFILGKESFYDTFHTVAD). Residues 190–210 (MMYFCQMLAAVESINAAIGVT) form a helical membrane-spanning segment. Residues 211 to 212 (KS) lie on the Cytoplasmic side of the membrane. The chain crosses the membrane as a helical span at residues 213-233 (PVVPSLFQLLGRNFILFIIFG). Topologically, residues 234 to 242 (TMEEMQNKA) are lumenal. A helical membrane pass occupies residues 243–263 (VVFFVFYIWSTVEIFRYPFYM). The Cytoplasmic portion of the chain corresponds to 264 to 280 (LSCIDMDWKVLTWLRYT). Residues 281–301 (VWIPLYPMGCLAEAVSVIQSI) traverse the membrane as a helical segment. Residues Tyr286 and Glu293 contribute to the active site. Residues 302–325 (PVFNETGRFSFTLPYPVKIKVRFS) are Lumenal-facing. Residues 326–346 (FFLQIYLILLFLGLYVNFRYL) form a helical membrane-spanning segment. Residues 347-362 (YKQRRRRFGQKKKKIH) lie on the Cytoplasmic side of the membrane.

Belongs to the very long-chain fatty acids dehydratase HACD family. In terms of assembly, may interact with enzymes of the ELO family (including ELOVL1); with those enzymes that mediate condensation, the first of the four steps of the reaction cycle responsible for fatty acids elongation, may be part of a larger fatty acids elongase complex. Interacts with RAC1. Associates with internalized insulin receptor/INSR complexes on Golgi/endosomal membranes; HACD3/PTPLAD1 together with ATIC and PRKAA2/AMPK2 is proposed to be part of a signaling network regulating INSR autophosphorylation and endocytosis.

The protein localises to the endoplasmic reticulum membrane. The enzyme catalyses a very-long-chain (3R)-3-hydroxyacyl-CoA = a very-long-chain (2E)-enoyl-CoA + H2O. The catalysed reaction is (3R)-hydroxyhexadecanoyl-CoA = (2E)-hexadecenoyl-CoA + H2O. The protein operates within lipid metabolism; fatty acid biosynthesis. Its function is as follows. Catalyzes the third of the four reactions of the long-chain fatty acids elongation cycle. This endoplasmic reticulum-bound enzymatic process, allows the addition of two carbons to the chain of long- and very long-chain fatty acids/VLCFAs per cycle. This enzyme catalyzes the dehydration of the 3-hydroxyacyl-CoA intermediate into trans-2,3-enoyl-CoA, within each cycle of fatty acid elongation. Thereby, it participates in the production of VLCFAs of different chain lengths that are involved in multiple biological processes as precursors of membrane lipids and lipid mediators. Involved in Rac1-signaling pathways leading to the modulation of gene expression. Promotes insulin receptor/INSR autophosphorylation and is involved in INSR internalization. The polypeptide is Very-long-chain (3R)-3-hydroxyacyl-CoA dehydratase 3 (Bos taurus (Bovine)).